Consider the following 551-residue polypeptide: Palmdelphin (551 aa).

Met1 carries the N-acetylmethionine modification. Residues 12–106 (QAITDKRKIQ…LQISANEEVI (95 aa)) are a coiled coil. Lys125 is covalently cross-linked (Glycyl lysine isopeptide (Lys-Gly) (interchain with G-Cter in SUMO2)). Residues Ser135 and Ser163 each carry the phosphoserine modification. Lys178 participates in a covalent cross-link: Glycyl lysine isopeptide (Lys-Gly) (interchain with G-Cter in SUMO1); alternate. A Glycyl lysine isopeptide (Lys-Gly) (interchain with G-Cter in SUMO2); alternate cross-link involves residue Lys178. Basic and acidic residues predominate over residues 247–258 (ERNSKSPTEYHE). The interval 247–267 (ERNSKSPTEYHEPVYANPFCR) is disordered. Thr270 carries the phosphothreonine modification. Disordered stretches follow at residues 298–387 (HESE…CSSP) and 452–536 (EDDE…DPSL). Ser322, Ser350, Ser371, Ser376, Ser385, and Ser386 each carry phosphoserine. Over residues 484–495 (KRSEVSPHENTN) the composition is skewed to basic and acidic residues. Phosphoserine is present on residues Ser498, Ser515, and Ser520.

It belongs to the paralemmin family. As to quaternary structure, interacts with GLUL. Post-translationally, phosphorylated. In terms of tissue distribution, expressed in the brain and the spinal cord. Expressed in the anterior olfactory nucleus, the olfactory tubercle, the nucleus supraopticus, the nucleus of the lateral olfactory tract, the piriform cortex, the cortico-amygdaloid transition zone, the septofimbrial nucleus and the indusium griseum (at protein level).

The protein localises to the cytoplasm. Its subcellular location is the cell projection. It is found in the dendrite. The protein resides in the dendritic spine. The protein is Palmdelphin (Palmd) of Rattus norvegicus (Rat).